The primary structure comprises 367 residues: Probable cysteine protease RD19D (367 aa).

The N-terminal stretch at 1–22 is a signal peptide; sequence MVAKALAQLITCIILFCHVVAS. A propeptide spans 23 to 136 (activation peptide); it reads VEDLTIRQVT…AEAPMVEVDG (114 aa). N-linked (GlcNAc...) asparagine glycosylation is present at Asn61. 2 disulfide bridges follow: Cys158–Cys208 and Cys192–Cys241. Residue Cys161 is part of the active site. N-linked (GlcNAc...) asparagine glycosylation occurs at Asn254. The cysteines at positions 297 and 352 are disulfide-linked. Catalysis depends on residues His304 and Asn331.

The protein belongs to the peptidase C1 family.

Functionally, probable thiol protease. The protein is Probable cysteine protease RD19D of Arabidopsis thaliana (Mouse-ear cress).